The primary structure comprises 253 residues: Serine/threonine-protein phosphatase 3 (253 aa).

It depends on Mn(2+) as a cofactor. Post-translationally, phosphorylated by YegI.

The catalysed reaction is O-phospho-L-seryl-[protein] + H2O = L-seryl-[protein] + phosphate. The enzyme catalyses O-phospho-L-threonyl-[protein] + H2O = L-threonyl-[protein] + phosphate. Its activity is regulated as follows. Activity dramatically decreases in the presence of the general protein phosphatase inhibitor sodium phosphate. Slightly inhibited by sodium fluoride. Activity decreases in the presence of the metal chelator EDTA. Its function is as follows. PP2C-like phosphatase that can dephosphorylate YegI. In vitro, can hydrolyze p-nitrophenyl phosphate (pNPP) to p-nitrophenol. This chain is Serine/threonine-protein phosphatase 3, found in Escherichia coli (strain K12).